Here is a 352-residue protein sequence, read N- to C-terminus: Photosystem II D2 protein (352 aa).

T2 is modified (N-acetylthreonine). Phosphothreonine is present on T2. A helical transmembrane segment spans residues 40–60 (TAYLALGGWFTGTTFVTSWYT). A chlorophyll a-binding site is contributed by H117. The chain crosses the membrane as a helical span at residues 124 to 140 (GFMLRQFEIARSVKIRP). Residues Q129 and N142 each coordinate pheophytin a. A helical transmembrane segment spans residues 152 to 165 (VFVSVFLIYPLGQS). H197 is a chlorophyll a binding site. The helical transmembrane segment at 207-227 (AALLCAIHGATVENTLFEDGD) threads the bilayer. A plastoquinone contacts are provided by H214 and F261. H214 is a binding site for Fe cation. H268 provides a ligand contact to Fe cation. A helical transmembrane segment spans residues 278–294 (GLWMSAIGVVGLALNLR).

It belongs to the reaction center PufL/M/PsbA/D family. In terms of assembly, PSII is composed of 1 copy each of membrane proteins PsbA, PsbB, PsbC, PsbD, PsbE, PsbF, PsbH, PsbI, PsbJ, PsbK, PsbL, PsbM, PsbT, PsbX, PsbY, PsbZ, Psb30/Ycf12, at least 3 peripheral proteins of the oxygen-evolving complex and a large number of cofactors. It forms dimeric complexes. It depends on The D1/D2 heterodimer binds P680, chlorophylls that are the primary electron donor of PSII, and subsequent electron acceptors. It shares a non-heme iron and each subunit binds pheophytin, quinone, additional chlorophylls, carotenoids and lipids. There is also a Cl(-1) ion associated with D1 and D2, which is required for oxygen evolution. The PSII complex binds additional chlorophylls, carotenoids and specific lipids. as a cofactor.

It localises to the plastid. It is found in the chloroplast thylakoid membrane. It catalyses the reaction 2 a plastoquinone + 4 hnu + 2 H2O = 2 a plastoquinol + O2. Its function is as follows. Photosystem II (PSII) is a light-driven water:plastoquinone oxidoreductase that uses light energy to abstract electrons from H(2)O, generating O(2) and a proton gradient subsequently used for ATP formation. It consists of a core antenna complex that captures photons, and an electron transfer chain that converts photonic excitation into a charge separation. The D1/D2 (PsbA/PsbD) reaction center heterodimer binds P680, the primary electron donor of PSII as well as several subsequent electron acceptors. D2 is needed for assembly of a stable PSII complex. This chain is Photosystem II D2 protein, found in Chlorella vulgaris (Green alga).